The chain runs to 273 residues: Inositol monophosphatase 1 (273 aa).

Mg(2+)-binding residues include E71, D91, V93, and D94. E71 provides a ligand contact to substrate. Residues 93–96 (VDGT), 194–196 (GSC), and D221 contribute to the substrate site. Mg(2+) is bound at residue D221.

It belongs to the inositol monophosphatase superfamily. Mg(2+) is required as a cofactor. As to expression, expressed in seedlings, flowers, young and matures green fruits. Detected in roots and stems.

The catalysed reaction is a myo-inositol phosphate + H2O = myo-inositol + phosphate. The protein operates within polyol metabolism; myo-inositol biosynthesis; myo-inositol from D-glucose 6-phosphate: step 2/2. Functionally, responsible for the provision of inositol required for synthesis of phosphatidylinositol and polyphosphoinositides. The protein is Inositol monophosphatase 1 (IMP1) of Solanum lycopersicum (Tomato).